Consider the following 348-residue polypeptide: Uroporphyrinogen decarboxylase (348 aa).

Substrate-binding positions include 28 to 32 (RQAGR), Asp-78, Tyr-154, Thr-209, and His-325.

This sequence belongs to the uroporphyrinogen decarboxylase family. Homodimer.

The protein localises to the cytoplasm. The catalysed reaction is uroporphyrinogen III + 4 H(+) = coproporphyrinogen III + 4 CO2. It functions in the pathway porphyrin-containing compound metabolism; protoporphyrin-IX biosynthesis; coproporphyrinogen-III from 5-aminolevulinate: step 4/4. Its function is as follows. Catalyzes the decarboxylation of four acetate groups of uroporphyrinogen-III to yield coproporphyrinogen-III. The protein is Uroporphyrinogen decarboxylase of Rhodopseudomonas palustris (strain BisB5).